Consider the following 91-residue polypeptide: C-C motif chemokine 5 (91 aa).

Positions 1 to 23 (MKVSATAFAVLLMAAALCAPASA) are cleaved as a signal peptide. Cystine bridges form between cysteine 33/cysteine 57 and cysteine 34/cysteine 73.

Belongs to the intercrine beta (chemokine CC) family.

It localises to the secreted. In terms of biological role, chemoattractant for blood monocytes, memory T-helper cells and eosinophils. Causes the release of histamine from basophils and activates eosinophils. May activate several chemokine receptors including CCR1, CCR3, CCR4 and CCR5. May also be an agonist of the G protein-coupled receptor GPR75. Together with GPR75, may play a role in neuron survival through activation of a downstream signaling pathway involving the PI3, Akt and MAP kinases. By activating GPR75 may also play a role in insulin secretion by islet cells. The chain is C-C motif chemokine 5 (CCL5) from Bos taurus (Bovine).